A 99-amino-acid chain; its full sequence is Putative pterin-4-alpha-carbinolamine dehydratase (99 aa).

It belongs to the pterin-4-alpha-carbinolamine dehydratase family.

The catalysed reaction is (4aS,6R)-4a-hydroxy-L-erythro-5,6,7,8-tetrahydrobiopterin = (6R)-L-erythro-6,7-dihydrobiopterin + H2O. The polypeptide is Putative pterin-4-alpha-carbinolamine dehydratase (Saccharolobus islandicus (strain M.16.27) (Sulfolobus islandicus)).